The following is a 225-amino-acid chain: Paired immunoglobulin-like type 2 receptor beta-2 (225 aa).

Positions 1–31 are cleaved as a signal peptide; sequence MALLISLPGETPAMAQILLLLSSACLHAGNS. Residues 32–195 are Extracellular-facing; that stretch reads ARSNGGNDFG…NPSLMNLGAM (164 aa). N-linked (GlcNAc...) asparagine glycans are attached at residues N90, N107, and N160. The helical transmembrane segment at 196–216 threads the bilayer; it reads VTMLLAKVVVIILVYGWMIFL. The Cytoplasmic portion of the chain corresponds to 217–225; sequence RWKQRPDPA.

It is found in the membrane. Paired receptors consist of highly related activating and inhibitory receptors and are widely involved in the regulation of the immune system. PILRB2 is probably a cellular signaling activating receptor that associates with ITAM-bearing adapter molecules on the cell surface. This Mus musculus (Mouse) protein is Paired immunoglobulin-like type 2 receptor beta-2 (Pilrb2).